A 153-amino-acid chain; its full sequence is Transcription antitermination protein NusB (153 aa).

Belongs to the NusB family.

Functionally, involved in transcription antitermination. Required for transcription of ribosomal RNA (rRNA) genes. Binds specifically to the boxA antiterminator sequence of the ribosomal RNA (rrn) operons. The polypeptide is Transcription antitermination protein NusB (Symbiobacterium thermophilum (strain DSM 24528 / JCM 14929 / IAM 14863 / T)).